The sequence spans 264 residues: Protein FAM228B (264 aa).

Belongs to the FAM228 family.

This chain is Protein FAM228B (FAM228B), found in Bos taurus (Bovine).